Here is a 107-residue protein sequence, read N- to C-terminus: MDKMKGKKFLVFISFFIILLGILDLIMEFDHRSYIIILVGLASLFASLNISISRLAIAVCIAAAVFIEAIHVSNLHYRVILYAIGSLPLIISVGSYLKGSEKGRGMR.

4 consecutive transmembrane segments (helical) span residues 9 to 28, 33 to 50, 55 to 72, and 77 to 99; these read FLVFISFFIILLGILDLIME, SYIIILVGLASLFASLNI, LAIAVCIAAAVFIEAIHV, and YRVILYAIGSLPLIISVGSYLKG.

It localises to the cell membrane. This is an uncharacterized protein from Archaeoglobus fulgidus (strain ATCC 49558 / DSM 4304 / JCM 9628 / NBRC 100126 / VC-16).